A 125-amino-acid chain; its full sequence is Small ribosomal subunit protein uS17 (125 aa).

2 disordered regions span residues Met-1 to Arg-21 and Val-101 to Ala-125.

Belongs to the universal ribosomal protein uS17 family. Part of the 30S ribosomal subunit.

In terms of biological role, one of the primary rRNA binding proteins, it binds specifically to the 5'-end of 16S ribosomal RNA. The polypeptide is Small ribosomal subunit protein uS17 (Opitutus terrae (strain DSM 11246 / JCM 15787 / PB90-1)).